Here is a 386-residue protein sequence, read N- to C-terminus: Glucose-1-phosphate adenylyltransferase (386 aa).

Residues tyrosine 100, glycine 165, 180-181, and serine 191 contribute to the alpha-D-glucose 1-phosphate site; that span reads EK.

The protein belongs to the bacterial/plant glucose-1-phosphate adenylyltransferase family. In terms of assembly, homotetramer.

The catalysed reaction is alpha-D-glucose 1-phosphate + ATP + H(+) = ADP-alpha-D-glucose + diphosphate. It participates in glycan biosynthesis; glycogen biosynthesis. Involved in the biosynthesis of ADP-glucose, a building block required for the elongation reactions to produce glycogen. Catalyzes the reaction between ATP and alpha-D-glucose 1-phosphate (G1P) to produce pyrophosphate and ADP-Glc. The chain is Glucose-1-phosphate adenylyltransferase from Clostridium beijerinckii (strain ATCC 51743 / NCIMB 8052) (Clostridium acetobutylicum).